We begin with the raw amino-acid sequence, 369 residues long: MGTVLSLSPASSAKGRRPGGLPEEKKKAPPAGDEALGGYGAPPAGKGGKGESRLKRPSVLISALTWKRLVAASAKKKKGSKKVTPKPASTGPDPLVQQRNRENLLRKGRDGPDGGGTAKPLAVPVPTVPTTAATCEPPSGGSAAAPPPGSGGGKPPPPPPPAPQAAPPAPGGSPRRVIVQASTGELLRCLGDFVCRRCYRLKELSPGELVGWFRGVDRSLLLQGWQDQAFITPANLVFVYLLCRESLRGDELASAAELQAAFLTCLYLAYSYMGNEISYPLKPFLVEPDKERFWQRCLRLIQRLSPQMLRLNADPHFFTQVFQDLKNEGEAAASTGGPPSGSSASTTSSSSARDSCATGAKHWTMNLDR.

The span at 1-11 (MGTVLSLSPAS) shows a compositional bias: polar residues. Disordered stretches follow at residues 1 to 55 (MGTV…SRLK), 72 to 176 (ASAK…SPRR), and 330 to 369 (EAAASTGGPPSGSSASTTSSSSARDSCATGAKHWTMNLDR). Gly-2 carries N-myristoyl glycine lipidation. Residues 74-84 (AKKKKGSKKVT) are compositionally biased toward basic residues. Thr-84 carries the phosphothreonine modification. Over residues 99–112 (RNRENLLRKGRDGP) the composition is skewed to basic and acidic residues. Residues 122-144 (AVPVPTVPTTAATCEPPSGGSAA) are compositionally biased toward low complexity. Residues 145–171 (APPPGSGGGKPPPPPPPAPQAAPPAPG) are compositionally biased toward pro residues. Low complexity predominate over residues 331–352 (AAASTGGPPSGSSASTTSSSSA).

The protein belongs to the cyclin-dependent kinase 5 activator family. In terms of assembly, heterodimer of a catalytic subunit and a regulatory subunit. Post-translationally, myristoylated. The Gly-2-Ala mutant is absent of the cell periphery, suggesting that a proper myristoylation signal is essential for the proper distribution of CDK5R2 (p39).

It is found in the cell membrane. In terms of biological role, activator of CDK5/TPKII. The polypeptide is Cyclin-dependent kinase 5 activator 2 (Cdk5r2) (Mus musculus (Mouse)).